The primary structure comprises 204 residues: Histone chaperone ASF1A (204 aa).

An interaction with histone H3, CHAF1B, and HIRA region spans residues 1–156 (MAKVQVNNVV…TRFHINWEDN (156 aa)). Positions 31–37 (IEDLSED) match the Required for interaction with HIRA motif. Residues 155-204 (DNTEKLEDAESSNPNLPSLLSTDALPSASKGWSTSENSLNVMLESHMDCM) form a required for interaction with HIRA region. At serine 192 the chain carries Phosphoserine; by TLK2.

The protein belongs to the ASF1 family. As to quaternary structure, interacts with histone H3 (via C-terminus), including histone H3.1, H3.2 and H3.3, and histone H4; the interaction with H3 is direct. Probably interacts with the heterodimeric form of H3-H4 taking the place of the second dimer. Interacts with the CHAF1A, CHAF1B and RBBP4 subunits of the CAF-1 complex. Interacts with CABIN1, HAT1, HIRA, NASP, TAF1 and UBN1. Found in a soluble complex with NASP and histones H3 and H4; the interaction with NASP is probably indirect and mediated by H3-H4. Interacts with CDAN1. Found in a cytosolic complex with IPO4 and histones H3 and H4. Interacts with CREBBP. Phosphorylated by TLK1 and TLK2. Highly phosphorylated in S-phase and at lower levels in M-phase. TLK2-mediated phosphorylation at Ser-192 prevents proteasome-dependent degradation.

Its subcellular location is the nucleus. Its function is as follows. Histone chaperone that facilitates histone deposition and histone exchange and removal during nucleosome assembly and disassembly. Cooperates with chromatin assembly factor 1 (CAF-1) to promote replication-dependent chromatin assembly and with HIRA to promote replication-independent chromatin assembly. Promotes homologous recombination-mediated repair of double-strand breaks (DSBs) at stalled or collapsed replication forks: acts by mediating histone replacement at DSBs, leading to recruitment of the MMS22L-TONSL complex and subsequent loading of RAD51. Also involved in the nuclear import of the histone H3-H4 dimer together with importin-4 (IPO4): specifically recognizes and binds newly synthesized histones with the monomethylation of H3 'Lys-9' and acetylation at 'Lys-14' (H3K9me1K14ac) marks, and diacetylation at 'Lys-5' and 'Lys-12' of H4 (H4K5K12ac) marks in the cytosol. Required for the formation of senescence-associated heterochromatin foci (SAHF) and efficient senescence-associated cell cycle exit. The chain is Histone chaperone ASF1A (ASF1A) from Bos taurus (Bovine).